We begin with the raw amino-acid sequence, 285 residues long: uncharacterized protein (285 aa).

The helical transmembrane segment at 197–217 (PTIGALLSLVSAFFSFIPFLM) threads the bilayer.

It localises to the membrane. This is an uncharacterized protein from Saccharomyces cerevisiae (strain ATCC 204508 / S288c) (Baker's yeast).